A 391-amino-acid polypeptide reads, in one-letter code: Phosphoglycerate kinase (391 aa).

Substrate contacts are provided by residues 19–21 (DYN), Arg-35, 58–61 (HMGR), Arg-117, and Arg-150. Residues Lys-201, Glu-323, and 349–352 (GGDT) each bind ATP.

The protein belongs to the phosphoglycerate kinase family. As to quaternary structure, monomer.

The protein resides in the cytoplasm. It catalyses the reaction (2R)-3-phosphoglycerate + ATP = (2R)-3-phospho-glyceroyl phosphate + ADP. The protein operates within carbohydrate degradation; glycolysis; pyruvate from D-glyceraldehyde 3-phosphate: step 2/5. This Desulforapulum autotrophicum (strain ATCC 43914 / DSM 3382 / VKM B-1955 / HRM2) (Desulfobacterium autotrophicum) protein is Phosphoglycerate kinase.